The primary structure comprises 160 residues: Transcriptional repressor NrdR (160 aa).

Residues 3–34 fold into a zinc finger; it reads CPFCGHADTQVVDSRVSEEGDTIRRRRRCLSC. In terms of domain architecture, ATP-cone spans 49-139; the sequence is PTVVKRDGSR…VYKSFEDIGE (91 aa).

The protein belongs to the NrdR family. Zn(2+) is required as a cofactor.

Functionally, negatively regulates transcription of bacterial ribonucleotide reductase nrd genes and operons by binding to NrdR-boxes. This chain is Transcriptional repressor NrdR, found in Bordetella avium (strain 197N).